We begin with the raw amino-acid sequence, 186 residues long: Crossover junction endodeoxyribonuclease RuvC (186 aa).

Residues D14, E73, and D145 contribute to the active site. The Mg(2+) site is built by D14, E73, and D145. The interval 162-186 (GRSLPPSRGRRRSGSRQRWRDYRPS) is disordered. The segment covering 169 to 178 (RGRRRSGSRQ) has biased composition (basic residues).

It belongs to the RuvC family. Homodimer which binds Holliday junction (HJ) DNA. The HJ becomes 2-fold symmetrical on binding to RuvC with unstacked arms; it has a different conformation from HJ DNA in complex with RuvA. In the full resolvosome a probable DNA-RuvA(4)-RuvB(12)-RuvC(2) complex forms which resolves the HJ. Mg(2+) serves as cofactor.

The protein localises to the cytoplasm. It catalyses the reaction Endonucleolytic cleavage at a junction such as a reciprocal single-stranded crossover between two homologous DNA duplexes (Holliday junction).. In terms of biological role, the RuvA-RuvB-RuvC complex processes Holliday junction (HJ) DNA during genetic recombination and DNA repair. Endonuclease that resolves HJ intermediates. Cleaves cruciform DNA by making single-stranded nicks across the HJ at symmetrical positions within the homologous arms, yielding a 5'-phosphate and a 3'-hydroxyl group; requires a central core of homology in the junction. The consensus cleavage sequence is 5'-(A/T)TT(C/G)-3'. Cleavage occurs on the 3'-side of the TT dinucleotide at the point of strand exchange. HJ branch migration catalyzed by RuvA-RuvB allows RuvC to scan DNA until it finds its consensus sequence, where it cleaves and resolves the cruciform DNA. The sequence is that of Crossover junction endodeoxyribonuclease RuvC from Chromohalobacter salexigens (strain ATCC BAA-138 / DSM 3043 / CIP 106854 / NCIMB 13768 / 1H11).